Here is a 254-residue protein sequence, read N- to C-terminus: MSDDEFIDTGLFAEPEGFTPPPPPPHFAKYQRKNKTDPAELNLRLVGKSPLWGHLLWNAGVFTADYLDKHADELVTGKDVLELGAAAGLPSLICGINKCNRVVCTDYPDPDLISNIQHNFDHCQGLDLSKTVVKGFIWGADAKPLMDDSEKEIQNEDKFDLVILSDLVFNHTEHLKLLKTCRDTVKKNGKCLVVFSPHRPKLLENDLEFFRTCEDFQFKAEKIDLVTWKPMFEEDDESIDIRARVYSFFLVPQW.

Residues Trp57, 84 to 86, Asp106, Trp138, and Ser165 contribute to the S-adenosyl-L-methionine site; that span reads GAA.

It belongs to the class I-like SAM-binding methyltransferase superfamily. EFM7 family.

Its subcellular location is the cytoplasm. S-adenosyl-L-methionine-dependent protein methyltransferase that trimethylates the N-terminal glycine 'Gly-2' of elongation factor 1-alpha, before also catalyzing the mono- and dimethylation of 'Lys-3'. The chain is Protein N-terminal and lysine N-methyltransferase EFM7 from Debaryomyces hansenii (strain ATCC 36239 / CBS 767 / BCRC 21394 / JCM 1990 / NBRC 0083 / IGC 2968) (Yeast).